A 117-amino-acid chain; its full sequence is MRTLLIRYILWRNDGDPSYYNDDFKKLILFDELVDDDDVCTLIKNMRMTLSDGPLLDRLNQPVNNVEDVKRMIAISAKVARDIGRRSEIRWEDSFTILFRMIEKYFDDLMTDLYGEK.

The protein belongs to the poxviridae OPG035 family.

In terms of biological role, bcl-2-like protein which contributes to virulence by preventing host NF-kappa-B activation in response to pro-inflammatory stimuli such as TNF-alpha or IL1B. The protein is Protein OPG035 (OPG035) of Monkeypox virus.